The primary structure comprises 269 residues: Shikimate dehydrogenase (NADP(+)) (269 aa).

Shikimate is bound by residues 17–19 (SKS) and Thr-64. The Proton acceptor role is filled by Lys-68. Glu-80 provides a ligand contact to NADP(+). Positions 89 and 105 each coordinate shikimate. NADP(+)-binding positions include 130 to 134 (GAGGA), 154 to 159 (NRTRAK), and Met-213. Residue Tyr-215 coordinates shikimate. NADP(+) is bound at residue Gly-237.

The protein belongs to the shikimate dehydrogenase family. As to quaternary structure, homodimer.

It carries out the reaction shikimate + NADP(+) = 3-dehydroshikimate + NADPH + H(+). It participates in metabolic intermediate biosynthesis; chorismate biosynthesis; chorismate from D-erythrose 4-phosphate and phosphoenolpyruvate: step 4/7. In terms of biological role, involved in the biosynthesis of the chorismate, which leads to the biosynthesis of aromatic amino acids. Catalyzes the reversible NADPH linked reduction of 3-dehydroshikimate (DHSA) to yield shikimate (SA). The sequence is that of Shikimate dehydrogenase (NADP(+)) from Neisseria meningitidis serogroup B (strain ATCC BAA-335 / MC58).